Reading from the N-terminus, the 162-residue chain is Large ribosomal subunit protein uL11 (162 aa).

A disordered region spans residues 1–27 (MAGTIEVLVPGGEANPGPPLGPELGPT).

It belongs to the universal ribosomal protein uL11 family. As to quaternary structure, part of the 50S ribosomal subunit. Forms part of the ribosomal stalk which helps the ribosome interact with GTP-bound translation factors. Forms a heptameric L10(L12)2(L12)2(L12)2 complex, where L10 forms an elongated spine to which 3 L12 dimers bind in a sequential fashion.

Functionally, forms part of the ribosomal stalk which helps the ribosome interact with GTP-bound translation factors. This chain is Large ribosomal subunit protein uL11, found in Haloarcula marismortui (strain ATCC 43049 / DSM 3752 / JCM 8966 / VKM B-1809) (Halobacterium marismortui).